The following is a 301-amino-acid chain: GTPase Era (301 aa).

Residues 7-175 (YCGFIAIVGR…AGIVRKHLPE (169 aa)) form the Era-type G domain. Residues 15 to 22 (GRPNVGKS) are G1. 15 to 22 (GRPNVGKS) serves as a coordination point for GTP. Residues 41 to 45 (QTTRH) form a G2 region. Residues 62–65 (DTPG) form a G3 region. GTP is bound by residues 62 to 66 (DTPGL) and 124 to 127 (NKVD). The segment at 124–127 (NKVD) is G4. The interval 154 to 156 (ISA) is G5. A KH type-2 domain is found at 206 to 283 (LGAELPYSVT…HLELWVKVKS (78 aa)).

The protein belongs to the TRAFAC class TrmE-Era-EngA-EngB-Septin-like GTPase superfamily. Era GTPase family. Monomer.

The protein resides in the cytoplasm. The protein localises to the cell inner membrane. In terms of biological role, an essential GTPase that binds both GDP and GTP, with rapid nucleotide exchange. Plays a role in 16S rRNA processing and 30S ribosomal subunit biogenesis and possibly also in cell cycle regulation and energy metabolism. This Salmonella agona (strain SL483) protein is GTPase Era.